A 74-amino-acid polypeptide reads, in one-letter code: Major structural pilin EpdE (74 aa).

The propeptide occupies 1 to 12 (MKFLEKLTSKKG). At Q13 the chain carries Pyrrolidone carboxylic acid. Residues 13-21 (QIAMELGIL) carry the QXSXEXXXL motif.

Post-translationally, the N-terminus is cleaved by the prepilin peptidase EppA, which recognizes the class III signal sequence. N-glycosylated. Glycosylated with an N-linked branched pentasaccharide glycan. May contain glycans at three sites. Glycosylation is AglB-dependent. The N-glycosylation does not occur unless the signal peptide has been cleaved first.

The protein resides in the secreted. It is found in the cell surface. The protein localises to the fimbrium. Functionally, major component of the type IV-like pili. The polypeptide is Major structural pilin EpdE (Methanococcus maripaludis (strain DSM 14266 / JCM 13030 / NBRC 101832 / S2 / LL)).